The chain runs to 453 residues: Tetrahydroanabasine acetyltransferase (453 aa).

Active-site proton acceptor residues include His163 and Asp388.

The protein belongs to the plant acyltransferase family. In terms of assembly, monomer.

It catalyses the reaction tetrahydroanabasine + acetyl-CoA = ammodendrine + CoA. The protein operates within alkaloid biosynthesis. Its function is as follows. Tetrahydroanabasine acetyltransferase involved in the accumulation of quinolizidine type antinutritional alkaloids (QAs). QAs impart a bitter taste to plants, acting as repellents and toxicants for herbivores and predators, and possess a variety of pharmacological effects, including sedative, anticonvulsant, anti-inflammatory, antiviral, antitumor, antipyretic, anti-hepatitis B, antifibrotic, antiallergic, antidiarrheal, analgesic and antimicrobial activities. Mediates the conversion of tetrahydroanabasine into ammodendrine. In Lupinus angustifolius (Narrow-leaved blue lupine), this protein is Tetrahydroanabasine acetyltransferase.